Reading from the N-terminus, the 480-residue chain is Aspartyl/glutamyl-tRNA(Asn/Gln) amidotransferase subunit B (480 aa).

The protein belongs to the GatB/GatE family. GatB subfamily. As to quaternary structure, heterotrimer of A, B and C subunits.

It carries out the reaction L-glutamyl-tRNA(Gln) + L-glutamine + ATP + H2O = L-glutaminyl-tRNA(Gln) + L-glutamate + ADP + phosphate + H(+). The catalysed reaction is L-aspartyl-tRNA(Asn) + L-glutamine + ATP + H2O = L-asparaginyl-tRNA(Asn) + L-glutamate + ADP + phosphate + 2 H(+). In terms of biological role, allows the formation of correctly charged Asn-tRNA(Asn) or Gln-tRNA(Gln) through the transamidation of misacylated Asp-tRNA(Asn) or Glu-tRNA(Gln) in organisms which lack either or both of asparaginyl-tRNA or glutaminyl-tRNA synthetases. The reaction takes place in the presence of glutamine and ATP through an activated phospho-Asp-tRNA(Asn) or phospho-Glu-tRNA(Gln). In Saccharophagus degradans (strain 2-40 / ATCC 43961 / DSM 17024), this protein is Aspartyl/glutamyl-tRNA(Asn/Gln) amidotransferase subunit B.